The chain runs to 306 residues: Proline-rich transmembrane protein 1 (306 aa).

Residues 1–142 (MSSEKSGLPD…PPPAPAQTAQ (142 aa)) are disordered. Residues 1–223 (MSSEKSGLPD…LEPRRPPHDY (223 aa)) are Cytoplasmic-facing. Residues 15-36 (TSPPPYNAPQPPAEPPAPPPQA) are compositionally biased toward pro residues. A compositionally biased stretch (basic residues) spans 40–49 (SHHHHHHHYH). Composition is skewed to pro residues over residues 87–111 (HAPP…PPDP) and 121–137 (PLPP…PPAP). Residues 224–244 (MPIAVLTTICCFWPTGIIAIF) form a helical membrane-spanning segment. The Extracellular segment spans residues 245–275 (KAVQVRTALARGDMVSAEIASREARNFSFIS). Positions 276 to 296 (LAVGIAAMVLCTILTVVIIIA) form an intramembrane region, helical. The Extracellular segment spans residues 297–306 (AQHHENYWDP).

It belongs to the CD225/Dispanin family. In terms of assembly, component of the outer core of AMPAR complex. AMPAR complex consists of an inner core made of 4 pore-forming GluA/GRIA proteins (GRIA1, GRIA2, GRIA3 and GRIA4) and 4 major auxiliary subunits arranged in a twofold symmetry. One of the two pairs of distinct binding sites is occupied either by CNIH2, CNIH3 or CACNG2, CACNG3. The other harbors CACNG2, CACNG3, CACNG4, CACNG8 or GSG1L. This inner core of AMPAR complex is complemented by outer core constituents binding directly to the GluA/GRIA proteins at sites distinct from the interaction sites of the inner core constituents. Outer core constituents include at least PRRT1, PRRT2, CKAMP44/SHISA9, FRRS1L and NRN1. The proteins of the inner and outer core serve as a platform for other, more peripherally associated AMPAR constituents. Alone or in combination, these auxiliary subunits control the gating and pharmacology of the AMPAR complex and profoundly impact their biogenesis and protein processing.

The protein resides in the cell membrane. It is found in the synapse. Required to maintain a pool of extrasynaptic AMPA-regulated glutamate receptors (AMPAR) which is necessary for synapse development and function. Regulates basal AMPAR function and synaptic transmission during development but is dispensable at mature hippocampal synapses. Plays a role in regulating basal phosphorylation levels of glutamate receptor GRIA1 and promotes GRIA1 and GRIA2 cell surface expression. The chain is Proline-rich transmembrane protein 1 from Homo sapiens (Human).